The chain runs to 375 residues: Actin, cytoplasmic (375 aa).

It belongs to the actin family.

It is found in the cytoplasm. The protein resides in the cytoskeleton. The enzyme catalyses ATP + H2O = ADP + phosphate + H(+). Functionally, actins are highly conserved proteins that are involved in various types of cell motility and are ubiquitously expressed in all eukaryotic cells. This Sterkiella nova (Ciliate) protein is Actin, cytoplasmic.